The chain runs to 750 residues: ABC transporter D family member 3 (750 aa).

Polar residues predominate over residues 1–14 (MKKNNVNNITETLN). The interval 1-32 (MKKNNVNNITETLNSSSSSSSSSGSSSDEEVK) is disordered. Residues 15-26 (SSSSSSSSSGSS) show a composition bias toward low complexity. Helical transmembrane passes span 63–83 (IVIILYEKPVIPLLLFLLLFG), 123–143 (FAIGGSALFDAIIKFIVSIMA), 188–208 (FTTLLSSIVSQCITGPMVVVY), and 215–235 (TTIDWYAPLIVYGYFFLGYFI). The region spanning 74-362 (PLLLFLLLFG…EQAKQQFEAL (289 aa)) is the ABC transmembrane type-1 domain. A coiled-coil region spans residues 334–370 (ALLKRSNKNIKNEELLVEEEQAKQQFEALLKNKKRVI). A helical transmembrane segment spans residues 382-402 (MFTFFSPLINYFIISIPVFFL). The ABC transporter domain occupies 507–737 (ITLDDVTYFT…SNNINTINID (231 aa)). Residue 540 to 547 (GPSGSGKS) coordinates ATP.

Belongs to the ABC transporter superfamily. ABCD family. Peroxisomal fatty acyl CoA transporter (TC 3.A.1.203) subfamily.

It is found in the membrane. This is ABC transporter D family member 3 (abcD3) from Dictyostelium discoideum (Social amoeba).